Consider the following 305-residue polypeptide: Homoserine O-acetyltransferase (305 aa).

The active-site Acyl-thioester intermediate is C142. Residues K163 and S192 each contribute to the substrate site. Catalysis depends on H235, which acts as the Proton acceptor. The active site involves E237. R249 provides a ligand contact to substrate.

The protein belongs to the MetA family.

It is found in the cytoplasm. The catalysed reaction is L-homoserine + acetyl-CoA = O-acetyl-L-homoserine + CoA. It participates in amino-acid biosynthesis; L-methionine biosynthesis via de novo pathway; O-acetyl-L-homoserine from L-homoserine: step 1/1. In terms of biological role, transfers an acetyl group from acetyl-CoA to L-homoserine, forming acetyl-L-homoserine. This Cereibacter sphaeroides (strain ATCC 17025 / ATH 2.4.3) (Rhodobacter sphaeroides) protein is Homoserine O-acetyltransferase.